The primary structure comprises 174 residues: Translation initiation factor IF-3 (174 aa).

This sequence belongs to the IF-3 family. In terms of assembly, monomer.

The protein localises to the cytoplasm. Functionally, IF-3 binds to the 30S ribosomal subunit and shifts the equilibrium between 70S ribosomes and their 50S and 30S subunits in favor of the free subunits, thus enhancing the availability of 30S subunits on which protein synthesis initiation begins. The protein is Translation initiation factor IF-3 of Helicobacter hepaticus (strain ATCC 51449 / 3B1).